A 199-amino-acid chain; its full sequence is Adenylyl-sulfate kinase (199 aa).

34 to 41 (GLSGSGKS) provides a ligand contact to ATP. Ser-108 serves as the catalytic Phosphoserine intermediate.

It belongs to the APS kinase family.

The enzyme catalyses adenosine 5'-phosphosulfate + ATP = 3'-phosphoadenylyl sulfate + ADP + H(+). It functions in the pathway sulfur metabolism; hydrogen sulfide biosynthesis; sulfite from sulfate: step 2/3. Functionally, catalyzes the synthesis of activated sulfate. In Staphylococcus carnosus (strain TM300), this protein is Adenylyl-sulfate kinase.